Here is a 367-residue protein sequence, read N- to C-terminus: Alanine racemase (367 aa).

Lys40 functions as the Proton acceptor; specific for D-alanine in the catalytic mechanism. Position 40 is an N6-(pyridoxal phosphate)lysine (Lys40). Arg136 is a substrate binding site. Residue Tyr263 is the Proton acceptor; specific for L-alanine of the active site. Substrate is bound at residue Met310.

It belongs to the alanine racemase family. Pyridoxal 5'-phosphate is required as a cofactor.

It catalyses the reaction L-alanine = D-alanine. The protein operates within amino-acid biosynthesis; D-alanine biosynthesis; D-alanine from L-alanine: step 1/1. In terms of biological role, catalyzes the interconversion of L-alanine and D-alanine. May also act on other amino acids. This Streptococcus thermophilus (strain ATCC BAA-491 / LMD-9) protein is Alanine racemase (alr).